Consider the following 104-residue polypeptide: Histone H4 (104 aa).

Positions 1 to 21 (MAGRGKVGKGYGKVGAKRHTK) are disordered.

The protein belongs to the histone H4 family. The nucleosome is a histone octamer containing two molecules each of H2A, H2B, H3 and H4 assembled in one H3-H4 heterotetramer and two H2A-H2B heterodimers. The octamer wraps approximately 147 bp of DNA.

It is found in the nucleus. Its subcellular location is the chromosome. Core component of nucleosome. Nucleosomes wrap and compact DNA into chromatin, limiting DNA accessibility to the cellular machineries which require DNA as a template. Histones thereby play a central role in transcription regulation, DNA repair, DNA replication and chromosomal stability. DNA accessibility is regulated via a complex set of post-translational modifications of histones, also called histone code, and nucleosome remodeling. The protein is Histone H4 of Sterkiella nova (Ciliate).